The following is a 239-amino-acid chain: Uridylate kinase (239 aa).

Position 12-15 (12-15) interacts with ATP; it reads KLSG. Residues 20–25 are involved in allosteric activation by GTP; it reads GDQGYG. Gly-54 lines the UMP pocket. Positions 55 and 59 each coordinate ATP. Residues Asp-74 and 135-142 contribute to the UMP site; that span reads TGNPYFTT. The ATP site is built by Thr-162, Tyr-168, and Asp-171.

This sequence belongs to the UMP kinase family. Homohexamer.

Its subcellular location is the cytoplasm. The enzyme catalyses UMP + ATP = UDP + ADP. The protein operates within pyrimidine metabolism; CTP biosynthesis via de novo pathway; UDP from UMP (UMPK route): step 1/1. Allosterically activated by GTP. Inhibited by UTP. Catalyzes the reversible phosphorylation of UMP to UDP. The polypeptide is Uridylate kinase (Geobacter metallireducens (strain ATCC 53774 / DSM 7210 / GS-15)).